Reading from the N-terminus, the 799-residue chain is Phenylalanine--tRNA ligase beta subunit (799 aa).

The tRNA-binding domain maps to 40 to 147 (KSHLSSVITV…KDTTLGISVR (108 aa)). The 78-residue stretch at 402–479 (SKTVTIETNL…RTIGYASIRT (78 aa)) folds into the B5 domain. Residues aspartate 457, aspartate 463, glutamate 466, and glutamate 467 each coordinate Mg(2+). An FDX-ACB domain is found at 707–799 (SHFPQGQLDL…TAKSNGYSLR (93 aa)).

The protein belongs to the phenylalanyl-tRNA synthetase beta subunit family. Type 1 subfamily. In terms of assembly, tetramer of two alpha and two beta subunits. It depends on Mg(2+) as a cofactor.

It is found in the cytoplasm. The catalysed reaction is tRNA(Phe) + L-phenylalanine + ATP = L-phenylalanyl-tRNA(Phe) + AMP + diphosphate + H(+). This is Phenylalanine--tRNA ligase beta subunit from Leptospira biflexa serovar Patoc (strain Patoc 1 / Ames).